We begin with the raw amino-acid sequence, 319 residues long: MKVPLGLWKVSRGNLWSTQKRVLTMSRCLNSDAGNEAKTVREGPAFSADLYMHPEKWKGLPPQRILELYWERMARLGSEYKPNKDELNALLTTSEYSNVPVNDIKKLYHRGEQGAIDIKGGNVNRDNSLRPFMFDELPSQAQELVAQHREQRFYNRLAAYELPLLAQYRQEYKRPSPESHPVTYRYTSYVGEEHPNSRKVVLSVKTKELGLEEKSLHKFRILARSRYDHTTDIFKMSSDKFEHASQNARYLHDILQRLLAESKDLTEDDFSDVPLDTRHTIAKSLRKKKRDYEFPEHWKRPEDAPKKKFDIVDQLLSTL.

A mitochondrion-targeting transit peptide spans 1-30 (MKVPLGLWKVSRGNLWSTQKRVLTMSRCLN).

It belongs to the mitochondrion-specific ribosomal protein mS35 family. Component of the mitochondrial small ribosomal subunit (mt-SSU). Mature yeast 74S mitochondrial ribosomes consist of a small (37S) and a large (54S) subunit. The 37S small subunit contains a 15S ribosomal RNA (15S mt-rRNA) and 34 different proteins. The 54S large subunit contains a 21S rRNA (21S mt-rRNA) and 46 different proteins.

The protein localises to the mitochondrion. In terms of biological role, component of the mitochondrial ribosome (mitoribosome), a dedicated translation machinery responsible for the synthesis of mitochondrial genome-encoded proteins, including at least some of the essential transmembrane subunits of the mitochondrial respiratory chain. The mitoribosomes are attached to the mitochondrial inner membrane and translation products are cotranslationally integrated into the membrane. This Saccharomyces cerevisiae (strain ATCC 204508 / S288c) (Baker's yeast) protein is Small ribosomal subunit protein mS35 (RSM24).